A 359-amino-acid polypeptide reads, in one-letter code: Histidinol-phosphate aminotransferase (359 aa).

Lys212 carries the post-translational modification N6-(pyridoxal phosphate)lysine.

The protein belongs to the class-II pyridoxal-phosphate-dependent aminotransferase family. Histidinol-phosphate aminotransferase subfamily. In terms of assembly, homodimer. Requires pyridoxal 5'-phosphate as cofactor.

It carries out the reaction L-histidinol phosphate + 2-oxoglutarate = 3-(imidazol-4-yl)-2-oxopropyl phosphate + L-glutamate. Its pathway is amino-acid biosynthesis; L-histidine biosynthesis; L-histidine from 5-phospho-alpha-D-ribose 1-diphosphate: step 7/9. The polypeptide is Histidinol-phosphate aminotransferase (Buchnera aphidicola subsp. Melaphis rhois).